The following is a 159-amino-acid chain: Membrane protein FAM174B (159 aa).

A signal peptide spans 1–27; that stretch reads MRAALPPARLLPLLLLLALLGAPAARA. The interval 28 to 73 is disordered; the sequence is SRAQSAAPPQPGAERQPRPPPGPGPGNATGTGSGEAAGGGGSSNSS. Residues 28 to 90 lie on the Extracellular side of the membrane; it reads SRAQSAAPPQ…ISSLLRDLHT (63 aa). Residues 52 to 69 are compositionally biased toward gly residues; it reads PGNATGTGSGEAAGGGGS. Residue N54 is glycosylated (N-linked (GlcNAc...) asparagine). The helical transmembrane segment at 91-111 threads the bilayer; that stretch reads LKAAVIVACAFTAFLIACLLL. At 112-159 the chain is on the cytoplasmic side; sequence RVFRSGKRLKKTRKYDIITTPAERVEMAPLNEEDDEDEDSTVFDIKYR.

Belongs to the FAM174 family.

It is found in the cell membrane. The protein resides in the golgi apparatus. Its function is as follows. Essential for Golgi structural integrity. In Bos taurus (Bovine), this protein is Membrane protein FAM174B (FAM174B).